The following is a 117-amino-acid chain: Immunoglobulin heavy variable 3-30-3 (117 aa).

The first 19 residues, 1–19, serve as a signal peptide directing secretion; sequence MEFGLSWVFLVALLRGVQC. The residue at position 20 (glutamine 20) is a Pyrrolidone carboxylic acid. Positions 20 to 44 are framework-1; sequence QVQLVESGGGVVQPGRSLRLSCAAS. One can recognise an Ig-like domain in the interval 20–117; the sequence is QVQLVESGGG…EDTAVYYCAR (98 aa). A disulfide bridge links cysteine 41 with cysteine 115. The interval 45-52 is complementarity-determining-1; sequence GFTFSSYA. The interval 53–69 is framework-2; the sequence is MHWVRQAPGKGLEWVAV. The segment at 70-77 is complementarity-determining-2; that stretch reads ISYDGSNK. Positions 78-115 are framework-3; that stretch reads YYADSVKGRFTISRDNSKNTLYLQMNSLRAEDTAVYYC. Positions 116 to 117 are complementarity-determining-3; the sequence is AR.

As to quaternary structure, immunoglobulins are composed of two identical heavy chains and two identical light chains; disulfide-linked.

It localises to the secreted. Its subcellular location is the cell membrane. In terms of biological role, v region of the variable domain of immunoglobulin heavy chains that participates in the antigen recognition. Immunoglobulins, also known as antibodies, are membrane-bound or secreted glycoproteins produced by B lymphocytes. In the recognition phase of humoral immunity, the membrane-bound immunoglobulins serve as receptors which, upon binding of a specific antigen, trigger the clonal expansion and differentiation of B lymphocytes into immunoglobulins-secreting plasma cells. Secreted immunoglobulins mediate the effector phase of humoral immunity, which results in the elimination of bound antigens. The antigen binding site is formed by the variable domain of one heavy chain, together with that of its associated light chain. Thus, each immunoglobulin has two antigen binding sites with remarkable affinity for a particular antigen. The variable domains are assembled by a process called V-(D)-J rearrangement and can then be subjected to somatic hypermutations which, after exposure to antigen and selection, allow affinity maturation for a particular antigen. The sequence is that of Immunoglobulin heavy variable 3-30-3 from Homo sapiens (Human).